We begin with the raw amino-acid sequence, 315 residues long: Aspartate carbamoyltransferase catalytic subunit (315 aa).

Positions 64 and 65 each coordinate carbamoyl phosphate. Lysine 92 contributes to the L-aspartate binding site. Carbamoyl phosphate contacts are provided by arginine 114, histidine 142, and glutamine 145. Residues arginine 175 and arginine 229 each contribute to the L-aspartate site. The carbamoyl phosphate site is built by glycine 270 and proline 271.

The protein belongs to the aspartate/ornithine carbamoyltransferase superfamily. ATCase family. In terms of assembly, heterododecamer (2C3:3R2) of six catalytic PyrB chains organized as two trimers (C3), and six regulatory PyrI chains organized as three dimers (R2).

It carries out the reaction carbamoyl phosphate + L-aspartate = N-carbamoyl-L-aspartate + phosphate + H(+). Its pathway is pyrimidine metabolism; UMP biosynthesis via de novo pathway; (S)-dihydroorotate from bicarbonate: step 2/3. Catalyzes the condensation of carbamoyl phosphate and aspartate to form carbamoyl aspartate and inorganic phosphate, the committed step in the de novo pyrimidine nucleotide biosynthesis pathway. This chain is Aspartate carbamoyltransferase catalytic subunit, found in Bradyrhizobium diazoefficiens (strain JCM 10833 / BCRC 13528 / IAM 13628 / NBRC 14792 / USDA 110).